We begin with the raw amino-acid sequence, 129 residues long: Mitochondrial pyruvate carrier 2 (129 aa).

At 2–22 the chain is on the mitochondrial matrix side; it reads STSSVRFAFRRFWQSETGPKT. Residues 23–39 form a helical membrane-spanning segment; it reads VHFWAPTLKWGLVFAGF. Over 40–54 the chain is Mitochondrial intermembrane; the sequence is SDMKRPVEKISGAQN. A helical transmembrane segment spans residues 55-71; it reads LSLLSTALIWTRWSFVI. Topologically, residues 72-74 are mitochondrial matrix; sequence KPR. A helical membrane pass occupies residues 75–91; it reads NILLASVNSFLCLTAGY. At 92–129 the chain is on the mitochondrial intermembrane side; sequence QLGRIANYRIRNGDSISQLCSYILSGADESKKEITTGR.

Belongs to the mitochondrial pyruvate carrier (MPC) (TC 2.A.105) family. The functional 150 kDa pyruvate import complex is a heteromer of MPC1 and either MPC2 or MPC3.

It is found in the mitochondrion. The protein resides in the mitochondrion inner membrane. The enzyme catalyses pyruvate(out) + H(+)(out) = pyruvate(in) + H(+)(in). Mediates the uptake of pyruvate into mitochondria. The protein is Mitochondrial pyruvate carrier 2 of Saccharomyces cerevisiae (strain ATCC 204508 / S288c) (Baker's yeast).